The chain runs to 124 residues: Small ribosomal subunit protein uS13 (124 aa).

Positions lysine 94–arginine 124 are disordered.

The protein belongs to the universal ribosomal protein uS13 family. As to quaternary structure, part of the 30S ribosomal subunit. Forms a loose heterodimer with protein S19. Forms two bridges to the 50S subunit in the 70S ribosome.

In terms of biological role, located at the top of the head of the 30S subunit, it contacts several helices of the 16S rRNA. In the 70S ribosome it contacts the 23S rRNA (bridge B1a) and protein L5 of the 50S subunit (bridge B1b), connecting the 2 subunits; these bridges are implicated in subunit movement. Contacts the tRNAs in the A and P-sites. This chain is Small ribosomal subunit protein uS13, found in Pseudarthrobacter chlorophenolicus (strain ATCC 700700 / DSM 12829 / CIP 107037 / JCM 12360 / KCTC 9906 / NCIMB 13794 / A6) (Arthrobacter chlorophenolicus).